Here is a 252-residue protein sequence, read N- to C-terminus: Mediator of RNA polymerase II transcription subunit 8 (252 aa).

Residues 117 to 142 (TEQKMLQNEQKAANLTNDAAMKQVTQ) adopt a coiled-coil conformation. Residues 215 to 224 (PMGGPAMSPG) are compositionally biased toward low complexity. A disordered region spans residues 215–252 (PMGGPAMSPGNVQQQLGKAPSAVKTNIKSANQVHPFSR). Residues 237 to 252 (VKTNIKSANQVHPFSR) show a composition bias toward polar residues.

The protein belongs to the Mediator complex subunit 8 family. Component of the Mediator complex.

Its subcellular location is the nucleus. Component of the Mediator complex, a coactivator involved in the regulated transcription of nearly all RNA polymerase II-dependent genes. Mediator functions as a bridge to convey information from gene-specific regulatory proteins to the basal RNA polymerase II transcription machinery. Mediator is recruited to promoters by direct interactions with regulatory proteins and serves as a scaffold for the assembly of a functional preinitiation complex with RNA polymerase II and the general transcription factors. Required for activated transcription of the MtnA and MtnB genes. This Drosophila melanogaster (Fruit fly) protein is Mediator of RNA polymerase II transcription subunit 8 (MED8).